Here is a 761-residue protein sequence, read N- to C-terminus: Ribonucleoside-diphosphate reductase 1 subunit alpha (761 aa).

One can recognise an ATP-cone domain in the interval leucine 5 to glycine 95. Residues lysine 9, glutamate 15–lysine 21, threonine 55, and lysine 91 contribute to the ATP site. Threonine 209 contacts GDP. Cysteine 225 and cysteine 462 form a disulfide bridge. Residues aspartate 232–leucine 234, arginine 262, and arginine 269 each bind dTTP. Asparagine 437 contacts GDP. The active-site Proton acceptor is the asparagine 437. The active-site Cysteine radical intermediate is the cysteine 439. GDP is bound by residues glutamate 441 and glutamate 623 to serine 625. The Proton acceptor role is filled by glutamate 441.

The protein belongs to the ribonucleoside diphosphate reductase large chain family. In terms of assembly, tetramer of two alpha (R1) and two beta (R2) subunits. The B1 protein is a dimer of alpha subunits. A radical transfer pathway occurs between 'Tyr-122' of R2 and R1.

The catalysed reaction is a 2'-deoxyribonucleoside 5'-diphosphate + [thioredoxin]-disulfide + H2O = a ribonucleoside 5'-diphosphate + [thioredoxin]-dithiol. Under complex allosteric control mediated by deoxynucleoside triphosphates and ATP binding to separate specificity and activation sites on the alpha subunit. The type of nucleotide bound at the specificity site determines substrate preference. It seems probable that ATP makes the enzyme reduce CDP and UDP, dGTP favors ADP reduction and dTTP favors GDP reduction. Stimulated by ATP and inhibited by dATP binding to the activity site. Its function is as follows. Provides the precursors necessary for DNA synthesis. Catalyzes the biosynthesis of deoxyribonucleotides from the corresponding ribonucleotides. R1 contains the binding sites for both substrates and allosteric effectors and carries out the actual reduction of the ribonucleotide. This chain is Ribonucleoside-diphosphate reductase 1 subunit alpha (nrdA), found in Salmonella typhimurium (strain LT2 / SGSC1412 / ATCC 700720).